Consider the following 176-residue polypeptide: CASP-like protein 5A1 (176 aa).

Over 1–35 the chain is Cytoplasmic; it reads MNPSHPAVHPVEAPPTDVHHAPRVRMKDYQGMPGT. The helical transmembrane segment at 36-56 threads the bilayer; it reads LGGLALRLGQFCFAVVAFSIM. The Extracellular segment spans residues 57–67; that stretch reads LSTDDFSTVTA. A helical membrane pass occupies residues 68–88; it reads FCYLVAATVLQCLWSLALAVI. Topologically, residues 89–102 are cytoplasmic; sequence DGYALLVKRSLRNS. A helical transmembrane segment spans residues 103 to 123; that stretch reads LVVSLFVVGDGVTATLTFAAA. Residues 124-152 are Extracellular-facing; sequence CASAGITVLIGNDLRECDQNHCGKYETAT. A helical transmembrane segment spans residues 153-173; that stretch reads AMAFLSWFMVSPSFLLTFWLL. The Cytoplasmic segment spans residues 174–176; it reads ASR.

Belongs to the Casparian strip membrane proteins (CASP) family. Homodimer and heterodimers.

It localises to the cell membrane. The protein is CASP-like protein 5A1 of Ginkgo biloba (Ginkgo).